The primary structure comprises 167 residues: Lipoprotein signal peptidase (167 aa).

The next 4 helical transmembrane spans lie at 8–28, 46–66, 68–88, and 101–121; these read TFLT…VVLL, WGHF…FGLF, QYKI…ALFL, and VALT…LLYG. Residues Asp-125 and Asp-143 contribute to the active site. A helical transmembrane segment spans residues 139–159; the sequence is FNLADAFISIGTLLLIGHLYF.

It belongs to the peptidase A8 family.

It is found in the cell inner membrane. The catalysed reaction is Release of signal peptides from bacterial membrane prolipoproteins. Hydrolyzes -Xaa-Yaa-Zaa-|-(S,diacylglyceryl)Cys-, in which Xaa is hydrophobic (preferably Leu), and Yaa (Ala or Ser) and Zaa (Gly or Ala) have small, neutral side chains.. It functions in the pathway protein modification; lipoprotein biosynthesis (signal peptide cleavage). Its function is as follows. This protein specifically catalyzes the removal of signal peptides from prolipoproteins. This is Lipoprotein signal peptidase from Chlamydia trachomatis serovar A (strain ATCC VR-571B / DSM 19440 / HAR-13).